The chain runs to 154 residues: Protein X (154 aa).

Residues 68–117 are mitochondrial targeting sequence; that stretch reads PCALRFTSARRMETTVNAHQVLPKVLHKRTLGLSAMSTTDLEAYFKDCLF.

The protein belongs to the orthohepadnavirus protein X family. In terms of assembly, may form homodimer. May interact with host CEBPA, CFLAR, CREB1, DDB1, E4F1, HBXIP, HSPD1/HSP60, NFKBIA, POLR2E and SMAD4. Interacts with host SMC5-SMC6 complex and induces its degradation. Interacts with host TRPC4AP; leading to prevent ubiquitination of TRPC4AP. Interacts with host PLSCR1; this interaction promotes ubiquitination and degradation of HBx and impairs HBx-mediated cell proliferation. In terms of processing, a fraction may be phosphorylated in insect cells and HepG2 cells, a human hepatoblastoma cell line. Phosphorylated in vitro by host protein kinase C or mitogen-activated protein kinase. N-acetylated in insect cells.

It localises to the host cytoplasm. The protein localises to the host nucleus. Its subcellular location is the host mitochondrion. Functionally, multifunctional protein that plays a role in silencing host antiviral defenses and promoting viral transcription. Does not seem to be essential for HBV infection. May be directly involved in development of cirrhosis and liver cancer (hepatocellular carcinoma). Most of cytosolic activities involve modulation of cytosolic calcium. The effect on apoptosis is controversial depending on the cell types in which the studies have been conducted. May induce apoptosis by localizing in mitochondria and causing loss of mitochondrial membrane potential. May also modulate apoptosis by binding host CFLAR, a key regulator of the death-inducing signaling complex (DISC). Promotes viral transcription by using the host E3 ubiquitin ligase DDB1 to target the SMC5-SMC6 complex to proteasomal degradation. This host complex would otherwise bind to viral episomal DNA, and prevents its transcription. Moderately stimulates transcription of many different viral and cellular transcription elements. Promoters and enhancers stimulated by HBx contain DNA binding sites for NF-kappa-B, AP-1, AP-2, c-EBP, ATF/CREB, or the calcium-activated factor NF-AT. The chain is Protein X from Hepatitis B virus genotype C subtype adr (isolate Japan/Nishioka/1983) (HBV-C).